The following is a 396-amino-acid chain: Apurinic-apyrimidinic endonuclease (396 aa).

Over residues 31-41 the composition is skewed to basic residues; the sequence is KGRGKIQKHIQ. The interval 31–100 is disordered; that stretch reads KGRGKIQKHI…TSGETIAQKK (70 aa). Over residues 55–70 the composition is skewed to polar residues; that stretch reads NQSPGTTVEETLTEEN. Basic and acidic residues predominate over residues 72-85; it reads STDKEETSKLENKP. The Zn(2+) site is built by His-185, His-225, Glu-261, Asp-295, His-298, His-332, Asp-345, His-347, and Glu-377.

This sequence belongs to the AP endonuclease 2 family. The cofactor is Zn(2+).

It is found in the nucleus. This Caenorhabditis elegans protein is Apurinic-apyrimidinic endonuclease (apn-1).